A 368-amino-acid chain; its full sequence is Phospho-N-acetylmuramoyl-pentapeptide-transferase (368 aa).

10 consecutive transmembrane segments (helical) span residues 31–51 (LTSM…LYGL), 73–93 (TMGG…WGNL), 98–118 (VILL…DDYM), 134–154 (FILS…YTGT), 175–195 (GPVI…IIGS), 213–233 (VLIS…PIVA), 249–269 (VFLS…AHPA), 271–291 (VFMG…IVIL), 296–316 (ILLL…ILQV), and 345–365 (KIVI…LSTL).

The protein belongs to the glycosyltransferase 4 family. MraY subfamily. Mg(2+) is required as a cofactor.

The protein resides in the cell inner membrane. It catalyses the reaction UDP-N-acetyl-alpha-D-muramoyl-L-alanyl-gamma-D-glutamyl-meso-2,6-diaminopimeloyl-D-alanyl-D-alanine + di-trans,octa-cis-undecaprenyl phosphate = di-trans,octa-cis-undecaprenyl diphospho-N-acetyl-alpha-D-muramoyl-L-alanyl-D-glutamyl-meso-2,6-diaminopimeloyl-D-alanyl-D-alanine + UMP. Its pathway is cell wall biogenesis; peptidoglycan biosynthesis. Functionally, catalyzes the initial step of the lipid cycle reactions in the biosynthesis of the cell wall peptidoglycan: transfers peptidoglycan precursor phospho-MurNAc-pentapeptide from UDP-MurNAc-pentapeptide onto the lipid carrier undecaprenyl phosphate, yielding undecaprenyl-pyrophosphoryl-MurNAc-pentapeptide, known as lipid I. This is Phospho-N-acetylmuramoyl-pentapeptide-transferase from Leptospira interrogans serogroup Icterohaemorrhagiae serovar copenhageni (strain Fiocruz L1-130).